A 181-amino-acid polypeptide reads, in one-letter code: Probable inactive acireductone dioxygenase 2 (181 aa).

The protein belongs to the acireductone dioxygenase (ARD) family.

It is found in the cytoplasm. The protein localises to the nucleus. In terms of biological role, probable inactive acireductone dioxygenase. The chain is Probable inactive acireductone dioxygenase 2 from Sorghum bicolor (Sorghum).